A 386-amino-acid chain; its full sequence is Succinate--CoA ligase [ADP-forming] subunit beta (386 aa).

Residues 9–244 (KEILRNFGVP…LDEEDPAEVE (236 aa)) enclose the ATP-grasp domain. Residues K46, 53–55 (GRG), E99, A102, and E107 contribute to the ATP site. Mg(2+) contacts are provided by N199 and D213. Substrate-binding positions include N264 and 321 to 323 (GIM).

The protein belongs to the succinate/malate CoA ligase beta subunit family. In terms of assembly, heterotetramer of two alpha and two beta subunits. Mg(2+) is required as a cofactor.

It catalyses the reaction succinate + ATP + CoA = succinyl-CoA + ADP + phosphate. It carries out the reaction GTP + succinate + CoA = succinyl-CoA + GDP + phosphate. The protein operates within carbohydrate metabolism; tricarboxylic acid cycle; succinate from succinyl-CoA (ligase route): step 1/1. Succinyl-CoA synthetase functions in the citric acid cycle (TCA), coupling the hydrolysis of succinyl-CoA to the synthesis of either ATP or GTP and thus represents the only step of substrate-level phosphorylation in the TCA. The beta subunit provides nucleotide specificity of the enzyme and binds the substrate succinate, while the binding sites for coenzyme A and phosphate are found in the alpha subunit. The sequence is that of Succinate--CoA ligase [ADP-forming] subunit beta from Polaromonas sp. (strain JS666 / ATCC BAA-500).